Here is a 302-residue protein sequence, read N- to C-terminus: Bifunctional phosphoglucose/phosphomannose isomerase (302 aa).

The 134-residue stretch at 27–160 (VEGEVVRIEA…KVYGIDVKIP (134 aa)) folds into the SIS domain. D-fructose 6-phosphate-binding residues include Gly47, Ser48, Ser87, Ser89, Thr92, and Arg135. Gly47, Ser48, Ser87, Ser89, Thr92, and Arg135 together coordinate D-glucose 6-phosphate. Glu203 functions as the Proton acceptor in the catalytic mechanism. His219 and Lys298 together coordinate D-fructose 6-phosphate. D-glucose 6-phosphate contacts are provided by His219 and Lys298. Catalysis depends on His219, which acts as the Proton donor. Lys298 acts as the Proton acceptor in catalysis.

This sequence belongs to the PGI/PMI family. As to quaternary structure, homodimer.

The protein resides in the cytoplasm. The enzyme catalyses alpha-D-glucose 6-phosphate = beta-D-fructose 6-phosphate. The catalysed reaction is D-mannose 6-phosphate = D-fructose 6-phosphate. With respect to regulation, inhibited by 5-phosphoarabinonate (PAB) and 6-phosphogluconate. Dual specificity isomerase that catalyzes the isomerization of both glucose-6-phosphate and mannose-6-phosphate to fructose-6-phosphate with similar catalytic efficiency. This Pyrobaculum aerophilum (strain ATCC 51768 / DSM 7523 / JCM 9630 / CIP 104966 / NBRC 100827 / IM2) protein is Bifunctional phosphoglucose/phosphomannose isomerase.